The following is a 933-amino-acid chain: Progesterone receptor (933 aa).

The disordered stretch occupies residues methionine 1 to threonine 157. Residues methionine 1–leucine 164 form an AF3; mediates transcriptional activation (in isoform B) region. Positions methionine 1–isoleucine 566 are modulating, Pro-Rich. Residue lysine 7 forms a Glycyl lysine isopeptide (Lys-Gly) (interchain with G-Cter in SUMO) linkage. Serine 20 is modified (phosphoserine). Residues leucine 55–leucine 59 carry the LXXL motif 1 motif. Serine 81 and serine 102 each carry phosphoserine. Residues leucine 115–leucine 119 carry the LXXL motif 2 motif. A phosphoserine mark is found at serine 130 and serine 162. The tract at residues methionine 165–histidine 305 is mediates transcriptional transrepression (in isoform A). Positions lysine 183–arginine 187 match the Nuclear localization signal motif. Phosphoserine occurs at positions 190 and 213. Residues leucine 195–proline 241 form a disordered region. Acidic residues predominate over residues glutamate 220–glutamate 231. Low complexity predominate over residues serine 232 to proline 241. Serine 294 is modified (phosphoserine; by MAPK1). The interval glycine 331–threonine 351 is disordered. The span at alanine 335 to serine 350 shows a compositional bias: low complexity. At serine 345 the chain carries Phosphoserine; by MAPK. Lysine 388 participates in a covalent cross-link: Glycyl lysine isopeptide (Lys-Gly) (interchain with G-Cter in SUMO); alternate. A Glycyl lysine isopeptide (Lys-Gly) (interchain with G-Cter in ubiquitin); alternate cross-link involves residue lysine 388. The residue at position 400 (serine 400) is a Phosphoserine; by CDK2. The tract at residues proline 415–serine 452 is disordered. A compositionally biased stretch (pro residues) spans proline 418–alanine 429. A compositionally biased stretch (low complexity) spans threonine 430–serine 452. Residues serine 456–arginine 546 form an AF1; mediates transcriptional activation region. Lysine 531 participates in a covalent cross-link: Glycyl lysine isopeptide (Lys-Gly) (interchain with G-Cter in SUMO). NR C4-type zinc fingers lie at residues cysteine 567–cysteine 587 and cysteine 603–cysteine 627. Residues cysteine 567–phenylalanine 639 constitute a DNA-binding region (nuclear receptor). Serine 676 is subject to Phosphoserine. In terms of domain architecture, NR LBD spans glutamine 679–isoleucine 913. Positions leucine 687–lysine 933 are AF2; mediates transcriptional activation. A progesterone-binding site is contributed by arginine 766.

Belongs to the nuclear hormone receptor family. NR3 subfamily. In terms of assembly, interacts with SMARD1 and UNC45A. Interacts with CUEDC2; the interaction promotes ubiquitination, decreases sumoylation, and represses transcriptional activity. Interacts with PIAS3; the interaction promotes sumoylation of PR in a hormone-dependent manner, inhibits DNA-binding, and alters nuclear export. Interacts with SP1; the interaction requires ligand-induced phosphorylation on Ser-345 by ERK1/2 MAPK. Interacts with PRMT2. Isoform A interacts with NCOR2. Isoform B (but not isoform A) interacts with NCOA2 and NCOA1. Isoform B (but not isoform A) interacts with KLF9. Interacts with GTF2B. In terms of processing, phosphorylated on multiple serine sites. Several of these sites are hormone-dependent. Phosphorylation on Ser-294 occurs preferentially on isoform B, is highly hormone-dependent and modulates ubiquitination and sumoylation on Lys-388. Phosphorylation on Ser-102 and Ser-345 also requires induction by hormone. Basal phosphorylation on Ser-81, Ser-162, Ser-190 and Ser-400 is increased in response to progesterone and can be phosphorylated in vitro by the CDK2-A1 complex. Increased levels of phosphorylation on Ser-400 also in the presence of EGF, heregulin, IGF, PMA and FBS. Phosphorylation at this site by CDK2 is ligand-independent, and increases nuclear translocation and transcriptional activity. Phosphorylation at Ser-162 and Ser-294, but not at Ser-190, is impaired during the G(2)/M phase of the cell cycle. Phosphorylation on Ser-345 by ERK1/2 MAPK is required for interaction with SP1. Sumoylation is hormone-dependent and represses transcriptional activity. Sumoylation on all three sites is enhanced by PIAS3. Desumoylated by SENP1. Sumoylation on Lys-388, the main site of sumoylation, is repressed by ubiquitination on the same site, and modulated by phosphorylation at Ser-294. Post-translationally, ubiquitination is hormone-dependent and represses sumoylation on the same site. Promoted by MAPK-mediated phosphorylation on Ser-294. Ubiquitinated by UBR5, leading to its degradation: UBR5 specifically recognizes and binds ligand-bound PGR when it is not associated with coactivators (NCOAs). In presence of NCOAs, the UBR5-degron is not accessible, preventing its ubiquitination and degradation. In terms of processing, palmitoylated by ZDHHC7 and ZDHHC21. Palmitoylation is required for plasma membrane targeting and for rapid intracellular signaling via ERK and AKT kinases and cAMP generation. In reproductive tissues the expression of isoform A and isoform B varies as a consequence of developmental and hormonal status. Isoform A and isoform B are expressed in comparable levels in uterine glandular epithelium during the proliferative phase of the menstrual cycle. Expression of isoform B but not of isoform A persists in the glands during mid-secretory phase. In the stroma, isoform A is the predominant form throughout the cycle. Heterogeneous isoform expression between the glands of the endometrium basalis and functionalis is implying region-specific responses to hormonal stimuli.

Its subcellular location is the nucleus. It localises to the cytoplasm. The protein localises to the mitochondrion outer membrane. The steroid hormones and their receptors are involved in the regulation of eukaryotic gene expression and affect cellular proliferation and differentiation in target tissues. Depending on the isoform, progesterone receptor functions as a transcriptional activator or repressor. In terms of biological role, ligand-dependent transdominant repressor of steroid hormone receptor transcriptional activity including repression of its isoform B, MR and ER. Transrepressional activity may involve recruitment of corepressor NCOR2. Functionally, transcriptional activator of several progesteron-dependent promoters in a variety of cell types. Involved in activation of SRC-dependent MAPK signaling on hormone stimulation. Its function is as follows. Increases mitochondrial membrane potential and cellular respiration upon stimulation by progesterone. This is Progesterone receptor (PGR) from Homo sapiens (Human).